We begin with the raw amino-acid sequence, 281 residues long: Large ribosomal subunit protein uL2 (281 aa).

The segment at 223–255 (TVRGSVMNPNDHPHGGGEGRAPIGRKSPVTPWG) is disordered.

Belongs to the universal ribosomal protein uL2 family. Part of the 50S ribosomal subunit. Forms a bridge to the 30S subunit in the 70S ribosome.

In terms of biological role, one of the primary rRNA binding proteins. Required for association of the 30S and 50S subunits to form the 70S ribosome, for tRNA binding and peptide bond formation. It has been suggested to have peptidyltransferase activity; this is somewhat controversial. Makes several contacts with the 16S rRNA in the 70S ribosome. The chain is Large ribosomal subunit protein uL2 from Mycoplasma capricolum subsp. capricolum (strain California kid / ATCC 27343 / NCTC 10154).